Here is a 270-residue protein sequence, read N- to C-terminus: MAAWGERLAGVRGVLLDISGVLYDGGEGGGAAIAGSVEAVARLKRSRLKVRFCTNESQKSRADLVGLLRRLGFDVSEGEVTAPAPAACLILKQRGLRPHLLVHDGVRSEFDQIDTSNPNCVVIADAGEGFSYQNMNKAFQVLMELENPVLFSLGKGRYYKETSGLMLDVGPYMKALEYACGIEAEVVGKPSPEFFKSALQEMGVEAHEAIMIGDDIVGDVGGAQRYGMRALQVRTGKFRPSDEHHPEVKADGYVDNLAEAVDLLLQHADK.

Residues D17 and S19 each contribute to the Mg(2+) site. Residues 17-19 (DIS), 54-55 (TN), and K189 contribute to the substrate site. D214 lines the Mg(2+) pocket.

It belongs to the HAD-like hydrolase superfamily. As to quaternary structure, homodimer. Mg(2+) serves as cofactor. Detected in liver (at protein level).

The protein resides in the cytoplasm. The protein localises to the nucleus. The catalysed reaction is diphosphate + H2O = 2 phosphate + H(+). Its function is as follows. Phosphatase that hydrolyzes imidodiphosphate, 3-phosphohistidine and 6-phospholysine. Has broad substrate specificity and can also hydrolyze inorganic diphosphate, but with lower efficiency. The sequence is that of Phospholysine phosphohistidine inorganic pyrophosphate phosphatase (LHPP) from Bos taurus (Bovine).